The chain runs to 166 residues: Disulfide bond formation protein B (166 aa).

Over 1-12 the chain is Cytoplasmic; sequence MKITKLPSYRQT. A helical transmembrane segment spans residues 13-29; sequence ALIIFAGCVGLILAALY. At 30-47 the chain is on the periplasmic side; sequence MQEVLGLHPCPLCITQRI. Cys39 and Cys42 are disulfide-bonded. A helical membrane pass occupies residues 48–64; that stretch reads FIIGVGLISLIAAIHNP. Topologically, residues 65–70 are cytoplasmic; that stretch reads AALGRK. A helical transmembrane segment spans residues 71–88; sequence VYGCLATLSGVIGAGVSA. The Periplasmic segment spans residues 89-145; that stretch reads RHVWLQNLPEDQVPACGPDLAYMFDAFPLLDALKLLFAGDGNCADVVASFLGLSIPG. A disulfide bridge links Cys104 with Cys131. Residues 146–164 traverse the membrane as a helical segment; that stretch reads WTFVAFVGLIAISVWQGLR. Residues 165–166 lie on the Cytoplasmic side of the membrane; the sequence is KA.

It belongs to the DsbB family.

It is found in the cell inner membrane. Required for disulfide bond formation in some periplasmic proteins. Acts by oxidizing the DsbA protein. This chain is Disulfide bond formation protein B, found in Saccharophagus degradans (strain 2-40 / ATCC 43961 / DSM 17024).